The chain runs to 392 residues: L-serine phosphate decarboxylase (392 aa).

The required for catalytic activity stretch occupies residues 22 to 29 (NAGSHSPS). Asn180 contacts O-phospho-L-serine. The residue at position 243 (Lys243) is an N6-(pyridoxal phosphate)lysine. O-phospho-L-serine-binding residues include Arg354 and Arg368.

The protein belongs to the class-II pyridoxal-phosphate-dependent aminotransferase family. As to quaternary structure, homodimer. Requires pyridoxal 5'-phosphate as cofactor.

It carries out the reaction O-phospho-L-serine + H(+) = phosphoethanolamine + CO2. It participates in cofactor biosynthesis. Functionally, pyridoxal phosphate (PLP)-dependent decarboxylase involved in the biosynthesis of norcobamides, cofactors in the tetrachloroethene reductive dehalogenase PceA of S.multivorans. Catalyzes the decarboxylation of L-serine O-phosphate to ethanolamine O-phosphate, the precursor for the linkage between the nucleotide loop and the corrin ring in norcobamide. Less active with L-threonine phosphate. No activity with L-serine or L-threonine. Has no aminotransferase activity as no production of L-glutamate with L-histidinol phosphate and 2-oxoglutarate as substrates. Complements growth defects in the S.enterica cobD deletion mutant, but of the cobamides, the norpseudo-vitamin B12 (norpseudo-B12) rather than the pseudo-B12 is produced in the mutant. However, addition of L-threonine phosphate to the culture minimal medium of the mutant results in formation of also the pseudo-B12, indicating the dual substrate specificity of this enzyme. The protein is L-serine phosphate decarboxylase of Sulfurospirillum multivorans (strain DM 12446 / JCM 15788 / NBRC 109480).